Here is a 398-residue protein sequence, read N- to C-terminus: Dihydrolipoyllysine-residue acetyltransferase component of acetoin cleaving system (398 aa).

The Lipoyl-binding domain occupies Ala-2–Gly-77. Residue Lys-43 is modified to N6-lipoyllysine. One can recognise a Peripheral subunit-binding (PSBD) domain in the interval Lys-118–Leu-155. Residues His-371 and Asp-375 contribute to the active site.

Belongs to the 2-oxoacid dehydrogenase family. (R)-lipoate is required as a cofactor.

It catalyses the reaction N(6)-[(R)-dihydrolipoyl]-L-lysyl-[protein] + acetyl-CoA = N(6)-[(R)-S(8)-acetyldihydrolipoyl]-L-lysyl-[protein] + CoA. It functions in the pathway ketone degradation; acetoin degradation. The sequence is that of Dihydrolipoyllysine-residue acetyltransferase component of acetoin cleaving system (acoC) from Bacillus subtilis (strain 168).